Here is a 479-residue protein sequence, read N- to C-terminus: 3-phytase B (479 aa).

An N-terminal signal peptide occupies residues 1 to 19 (MPRTSLLTLACALATGASA). H82 functions as the Nucleophile in the catalytic mechanism. Residues N106, N191, N227, N250, and N315 are each glycosylated (N-linked (GlcNAc...) asparagine). D338 serves as the catalytic Proton donor. N425, N442, and N458 each carry an N-linked (GlcNAc...) asparagine glycan.

Belongs to the histidine acid phosphatase family.

It catalyses the reaction 1D-myo-inositol hexakisphosphate + H2O = 1D-myo-inositol 1,2,4,5,6-pentakisphosphate + phosphate. Catalyzes the hydrolysis of inorganic orthophosphate from phytate. The protein is 3-phytase B (phyB) of Aspergillus niger.